Reading from the N-terminus, the 111-residue chain is Transcription and mRNA export factor SUS1 (111 aa).

Belongs to the ENY2 family. In terms of assembly, component of the nuclear pore complex (NPC)-associated TREX-2 complex (transcription and export complex 2), composed of at least SUS1, SAC3, THP1, SEM1, and CDC31. TREX-2 contains 2 SUS1 chains. The TREX-2 complex interacts with the nucleoporin NUP1. Component of the 1.8 MDa SAGA transcription coactivator-HAT complex. SAGA is built of 5 distinct domains with specialized functions. Within the SAGA complex, SUS1, SGF11, SGF73 and UBP8 form an additional subcomplex of SAGA called the DUB module (deubiquitination module). Interacts directly with THP1, SAC3, SGF11, and with the RNA polymerase II.

It is found in the nucleus. Its subcellular location is the nucleoplasm. It localises to the cytoplasm. The protein localises to the P-body. Functionally, involved in mRNA export coupled transcription activation by association with both the TREX-2 and the SAGA complexes. At the promoters, SAGA is required for recruitment of the basal transcription machinery. It influences RNA polymerase II transcriptional activity through different activities such as TBP interaction and promoter selectivity, interaction with transcription activators, and chromatin modification through histone acetylation and deubiquitination. Within the SAGA complex, participates in a subcomplex required for deubiquitination of H2B and for the maintenance of steady-state H3 methylation levels. The TREX-2 complex functions in docking export-competent ribonucleoprotein particles (mRNPs) to the nuclear entrance of the nuclear pore complex (nuclear basket). TREX-2 participates in mRNA export and accurate chromatin positioning in the nucleus by tethering genes to the nuclear periphery. May also be involved in cytoplasmic mRNA decay by interaction with components of P-bodies. The chain is Transcription and mRNA export factor SUS1 from Lodderomyces elongisporus (strain ATCC 11503 / CBS 2605 / JCM 1781 / NBRC 1676 / NRRL YB-4239) (Yeast).